A 1349-amino-acid chain; its full sequence is Protein strawberry notch homolog 2 (1349 aa).

Disordered regions lie at residues 170-212 (YQSH…QHPD), 609-633 (STRR…PKAS), and 1319-1349 (PTET…FPNS). The segment covering 177–188 (EEEEGEEEEETE) has biased composition (acidic residues). Over residues 609–631 (STRRRRDRGGGKRKRRPRGRGPK) the composition is skewed to basic residues.

The protein belongs to the SBNO family. As to quaternary structure, interacts with TAL1; this interaction inhibits TAL1 occupancy of the DCSTAMP promoter, leading to the activation of the DCSTAMP promoter by the transcription factor MITF. Expressed in the spleen and bone marrow, and to a lesser extent in the kidney, liver, brain, skin, heart and muscle. Expressed predominantly in osteoclasts, and to a lesser extent in T-cells, B-cells and osteoblasts. Expressed in macrophages.

Functionally, acts as a transcriptional coregulator, that can have both coactivator and corepressor functions. Inhibits the DCSTAMP-repressive activity of TAL1, hence enhancing the access of the transcription factor MITF to the DC-STAMP promoter in osteoclast. Plays a role in bone homeostasis; required as a positive regulator in TNFSF11//RANKL-mediated osteoclast fusion via a DCSTAMP-dependent pathway. May also be required in the regulation of osteoblast differentiation. Involved in the transcriptional corepression of NF-kappaB in macrophages. Plays a role as a regulator in the pro-inflammatory cascade. This is Protein strawberry notch homolog 2 (Sbno2) from Mus musculus (Mouse).